Here is a 362-residue protein sequence, read N- to C-terminus: Snurportin-1 (362 aa).

The residue at position 1 (Met1) is an N-acetylmethionine. 2 disordered regions span residues 1–40 (MEELSQALAGSFSVSQDLNSTAAPHPRLSQYKSKYSSLEQ) and 69–90 (DWTGMESEEEEEKKDDEEMDVD). The interval 1–65 (MEELSQALAG…LDYVNHARRL (65 aa)) is necessary for interaction with KPNB1 and m3G-cap U1 and U5 snRNP import receptor activity. The tract at residues 1–160 (MEELSQALAG…NTFPSLLPGG (160 aa)) is necessary for interaction with XPO1. The IBB domain maps to 11-73 (SFSVSQDLNS…RLAEDDWTGM (63 aa)). The segment covering 12 to 22 (FSVSQDLNSTA) has biased composition (polar residues). Over residues 69–89 (DWTGMESEEEEEKKDDEEMDV) the composition is skewed to acidic residues. Phosphoserine is present on Ser75. An interaction with m3G-cap structure region spans residues 128-130 (GKR). Residues 210 to 330 (LHSKLPEEEG…GIMGKLTPRA (121 aa)) form a necessary for binding to the m3G-cap structure region. The disordered stretch occupies residues 319 to 362 (KEGIMGKLTPRASENGHYELEHLSTPKLKSPPQRPNHPESLMEN). Basic and acidic residues predominate over residues 332–342 (ENGHYELEHLS).

It belongs to the snurportin family. As to quaternary structure, component of an import snRNP complex composed of KPNB1, SNUPN, SMN1 and ZNF259. Component of a nuclear export receptor complex composed of KPNB1, Ran, SNUPN and XPO1. Found in a trimeric export complex with SNUPN, Ran and XPO1. Interacts (via IBB domain) with KPNB1; the interaction is direct. Interacts with DDX20, IPO7, SMN1, SNRPB and XPO1. Interacts directly with XPO1. Its interaction with XPO1 and binding to m3G-cap U snRNPs appears to be mutually exclusive. Can form homomers.

Its subcellular location is the nucleus. It localises to the cytoplasm. Functions as an U snRNP-specific nuclear import adapter. Involved in the trimethylguanosine (m3G)-cap-dependent nuclear import of U snRNPs. Binds specifically to the terminal m3G-cap U snRNAs. This is Snurportin-1 (SNUPN) from Bos taurus (Bovine).